The primary structure comprises 452 residues: Trigger factor (452 aa).

The region spanning 170–256 (NSIVKVDFVE…IKSIKKRDLP (87 aa)) is the PPIase FKBP-type domain.

Belongs to the FKBP-type PPIase family. Tig subfamily.

The protein resides in the cytoplasm. The enzyme catalyses [protein]-peptidylproline (omega=180) = [protein]-peptidylproline (omega=0). Involved in protein export. Acts as a chaperone by maintaining the newly synthesized protein in an open conformation. Functions as a peptidyl-prolyl cis-trans isomerase. The sequence is that of Trigger factor from Borrelia garinii subsp. bavariensis (strain ATCC BAA-2496 / DSM 23469 / PBi) (Borreliella bavariensis).